Consider the following 264-residue polypeptide: Thymidylate synthase (264 aa).

Arg-21 lines the dUMP pocket. Position 51 (His-51) interacts with (6R)-5,10-methylene-5,6,7,8-tetrahydrofolate. Arg-126–Arg-127 contacts dUMP. Catalysis depends on Cys-146, which acts as the Nucleophile. Residues Arg-166–Asp-169, Asn-177, and His-207–Tyr-209 contribute to the dUMP site. Asp-169 provides a ligand contact to (6R)-5,10-methylene-5,6,7,8-tetrahydrofolate. Ala-263 lines the (6R)-5,10-methylene-5,6,7,8-tetrahydrofolate pocket.

The protein belongs to the thymidylate synthase family. Bacterial-type ThyA subfamily. Homodimer.

It localises to the cytoplasm. The catalysed reaction is dUMP + (6R)-5,10-methylene-5,6,7,8-tetrahydrofolate = 7,8-dihydrofolate + dTMP. The protein operates within pyrimidine metabolism; dTTP biosynthesis. Its function is as follows. Catalyzes the reductive methylation of 2'-deoxyuridine-5'-monophosphate (dUMP) to 2'-deoxythymidine-5'-monophosphate (dTMP) while utilizing 5,10-methylenetetrahydrofolate (mTHF) as the methyl donor and reductant in the reaction, yielding dihydrofolate (DHF) as a by-product. This enzymatic reaction provides an intracellular de novo source of dTMP, an essential precursor for DNA biosynthesis. The polypeptide is Thymidylate synthase (Pectobacterium carotovorum subsp. carotovorum (strain PC1)).